We begin with the raw amino-acid sequence, 496 residues long: Amino-acid acetyltransferase, mitochondrial (496 aa).

An N-acetyltransferase domain is found at 333 to 493; it reads YHGTDCLTNG…LDVIDSIQPT (161 aa).

The protein belongs to the acetyltransferase family.

Its subcellular location is the mitochondrion. It carries out the reaction L-glutamate + acetyl-CoA = N-acetyl-L-glutamate + CoA + H(+). It functions in the pathway amino-acid biosynthesis; L-arginine biosynthesis; N(2)-acetyl-L-ornithine from L-glutamate: step 1/4. N-acetylglutamate synthase involved in arginine biosynthesis. In Schizosaccharomyces japonicus (strain yFS275 / FY16936) (Fission yeast), this protein is Amino-acid acetyltransferase, mitochondrial (arg2).